Here is an 865-residue protein sequence, read N- to C-terminus: Probable beta-glucosidase J (865 aa).

Residue aspartate 233 is part of the active site. N-linked (GlcNAc...) asparagine glycosylation is found at asparagine 330, asparagine 447, asparagine 503, and asparagine 764. In terms of domain architecture, PA14 spans 411–579 (TGQPGYTFRV…DTDTAIQQAV (169 aa)).

Belongs to the glycosyl hydrolase 3 family.

The protein resides in the secreted. It carries out the reaction Hydrolysis of terminal, non-reducing beta-D-glucosyl residues with release of beta-D-glucose.. Its pathway is glycan metabolism; cellulose degradation. Functionally, beta-glucosidases are one of a number of cellulolytic enzymes involved in the degradation of cellulosic biomass. Catalyzes the last step releasing glucose from the inhibitory cellobiose. In Aspergillus fumigatus (strain ATCC MYA-4609 / CBS 101355 / FGSC A1100 / Af293) (Neosartorya fumigata), this protein is Probable beta-glucosidase J (bglJ).